Here is a 183-residue protein sequence, read N- to C-terminus: MAFNPNPEKTTSCCSTSKAQDKCTCPKGKCECETCPKSTKTPGSGPCNCGVKEKVSTCGCNGSGAACTCPPGQCACDSCPRKAKSVSTCGCGGSAAACSCPPGKCACDSCPKQAQEKVSSCACNGSGGACTCPPGKCSCSGCPAQAKENPADQPTTCGCQGVGVACTCPPGQCACDGCPAKAK.

A cys-rich copper-binding 1 region spans residues 1–35 (MAFNPNPEKTTSCCSTSKAQDKCTCPKGKCECETC). The spacer B1 stretch occupies residues 36-45 (PKSTKTPGSG). The interval 46 to 79 (PCNCGVKEKVSTCGCNGSGAACTCPPGQCACDSC) is cys-rich copper-binding 2. Residues 80–88 (PRKAKSVST) form a spacer B2 region. Residues 89 to 110 (CGCGGSAAACSCPPGKCACDSC) are cys-rich copper-binding 3. The spacer B3 stretch occupies residues 111 to 120 (PKQAQEKVSS). A cys-rich copper-binding 4 region spans residues 121–142 (CACNGSGGACTCPPGKCSCSGC). The interval 143–156 (PAQAKENPADQPTT) is spacer B4. A cys-rich copper-binding 5 region spans residues 157 to 183 (CGCQGVGVACTCPPGQCACDGCPAKAK).

It belongs to the metallothionein superfamily.

The protein localises to the cytoplasm. It localises to the cell cortex. Copper metallothionein that protects the cell against copper toxicity by tightly chelating copper ions. Required for antioxidant-mediated growth rescue in the presence of fluconazole. Acts as a critical factors for lung colonization and virulence. The protein is Copper metallothionein 2 of Cryptococcus neoformans var. grubii serotype A (strain H99 / ATCC 208821 / CBS 10515 / FGSC 9487) (Filobasidiella neoformans var. grubii).